A 537-amino-acid chain; its full sequence is Organic anion transporter 3 (537 aa).

Residues 1–11 are Cytoplasmic-facing; the sequence is MTFSEILDRVG. Ser4 is subject to Phosphoserine. A helical membrane pass occupies residues 12–32; sequence SMGPFQYLHVTLLALPILGIA. The Extracellular segment spans residues 33–123; the sequence is NHNLLQIFTA…LVCGSNKLKE (91 aa). A glycan (N-linked (GlcNAc...) asparagine) is linked at Asn81. A helical membrane pass occupies residues 124 to 144; it reads MAQSVFMAGILVGGPVFGELS. Residues 145-150 lie on the Cytoplasmic side of the membrane; it reads DRFGRK. A helical membrane pass occupies residues 151–171; it reads PILTWSYLLLAASGSSAAFSP. The Extracellular portion of the chain corresponds to 172–176; the sequence is SLTVY. A helical transmembrane segment spans residues 177–197; that stretch reads MIFRFLCGCSISGISLSTIIL. Residues 198–212 lie on the Cytoplasmic side of the membrane; sequence NVEWVPTSTRAISST. The helical transmembrane segment at 213–233 threads the bilayer; sequence TIGYCYTIGQFILPGLAYAVP. Over 234–236 the chain is Extracellular; it reads QWR. A helical transmembrane segment spans residues 237–257; sequence WLQLSVSAAFFIFSLLSWWVP. The Cytoplasmic portion of the chain corresponds to 258 to 327; it reads ESIRWLVLSG…FRVSILRRVT (70 aa). The helical transmembrane segment at 328–348 threads the bilayer; that stretch reads FCLSLAWFATGFAYYSLAMGV. Over 349–354 the chain is Extracellular; it reads EEFGVN. A helical membrane pass occupies residues 355–375; that stretch reads IYILQIIFGGVDIPAKFITIL. The Cytoplasmic segment spans residues 376-383; the sequence is SISYLGRR. A helical transmembrane segment spans residues 384–404; that stretch reads ITQGFLLILAGVAILALIFVS. Topologically, residues 405-411 are extracellular; it reads SEMQLLR. A helical membrane pass occupies residues 412 to 432; that stretch reads TALAVFGKGCLSGSFSCLFLY. Topologically, residues 433–471 are cytoplasmic; sequence TSELYPTVLRQTGMGISNIWARVGSMIAPLVKITGELQP. Residues 472–492 form a helical membrane-spanning segment; the sequence is FIPNVIFGTMTLLGGSAAFFL. Topologically, residues 493–537 are extracellular; that stretch reads LETLNRPLPETIEDIQDWYQQTKKTKQEPEAEKASQTIPLKTGGP. A disordered region spans residues 513–537; it reads QTKKTKQEPEAEKASQTIPLKTGGP.

This sequence belongs to the major facilitator (TC 2.A.1) superfamily. Organic cation transporter (TC 2.A.1.19) family. As to expression, expressed mainly in kidney. In kidney, detected in almost all parts of the nephron, including macula densa cells. Expressed (at protein level) throughout the renal cortex. Widely distributed in the brain with no large regional differences. Expressed in the choroid plexus (CP, located in the ventricles of the brain). Expressed in developing bone. Weakly expressed in brain and eye.

Its subcellular location is the basolateral cell membrane. The enzyme catalyses estrone 3-sulfate(out) + glutarate(in) = estrone 3-sulfate(in) + glutarate(out). The catalysed reaction is estrone 3-sulfate(in) + 2-oxoglutarate(out) = estrone 3-sulfate(out) + 2-oxoglutarate(in). It catalyses the reaction taurocholate(out) + glutarate(in) = taurocholate(in) + glutarate(out). It carries out the reaction dehydroepiandrosterone 3-sulfate(out) + glutarate(in) = dehydroepiandrosterone 3-sulfate(in) + glutarate(out). The enzyme catalyses glutarate(in) + 2-oxoglutarate(out) = glutarate(out) + 2-oxoglutarate(in). The catalysed reaction is urate(in) + 2-oxoglutarate(out) = urate(out) + 2-oxoglutarate(in). It catalyses the reaction prostaglandin F2alpha(out) + glutarate(in) = prostaglandin F2alpha(in) + glutarate(out). It carries out the reaction prostaglandin F2alpha(out) + 2-oxoglutarate(in) = prostaglandin F2alpha(in) + 2-oxoglutarate(out). The enzyme catalyses (R)-carnitine(out) + 2-oxoglutarate(in) = (R)-carnitine(in) + 2-oxoglutarate(out). The catalysed reaction is glutarate(in) + (R)-carnitine(out) = glutarate(out) + (R)-carnitine(in). It catalyses the reaction prostaglandin E2(out) + 2-oxoglutarate(in) = prostaglandin E2(in) + 2-oxoglutarate(out). It carries out the reaction prostaglandin E2(out) + glutarate(in) = prostaglandin E2(in) + glutarate(out). The enzyme catalyses urate(in) + glutarate(out) = urate(out) + glutarate(in). The catalysed reaction is taurocholate(out) + 2-oxoglutarate(in) = taurocholate(in) + 2-oxoglutarate(out). It catalyses the reaction dehydroepiandrosterone 3-sulfate(out) + 2-oxoglutarate(in) = dehydroepiandrosterone 3-sulfate(in) + 2-oxoglutarate(out). It carries out the reaction kynurenate(out) + a dicarboxylate(in) = kynurenate(in) + a dicarboxylate(out). The enzyme catalyses (indol-3-yl)acetate(out) + a dicarboxylate(in) = (indol-3-yl)acetate(in) + a dicarboxylate(out). The catalysed reaction is indoxyl sulfate(out) + a dicarboxylate(in) = indoxyl sulfate(in) + a dicarboxylate(out). It catalyses the reaction N-benzoylglycine(out) + a dicarboxylate(in) = N-benzoylglycine(in) + a dicarboxylate(out). It carries out the reaction 3-carboxy-4-methyl-5-propyl-2-furanpropanoate(out) + a dicarboxylate(in) = 3-carboxy-4-methyl-5-propyl-2-furanpropanoate(in) + a dicarboxylate(out). The enzyme catalyses (6R)-L-erythro-5,6,7,8-tetrahydrobiopterin(out) + a dicarboxylate(in) = (6R)-L-erythro-5,6,7,8-tetrahydrobiopterin(in) + a dicarboxylate(out). The catalysed reaction is L-erythro-7,8-dihydrobiopterin(out) + a dicarboxylate(in) = L-erythro-7,8-dihydrobiopterin(in) + a dicarboxylate(out). It catalyses the reaction L-sepiapterin(out) + a dicarboxylate(in) = L-sepiapterin(in) + a dicarboxylate(out). With respect to regulation, expression inhibited by androgens such as testosterone. In terms of biological role, functions as an organic anion/dicarboxylate exchanger that couples organic anion uptake indirectly to the sodium gradient. Transports organic anions such as estrone 3-sulfate (E1S) and urate in exchange for dicarboxylates such as glutarate or ketoglutarate (2-oxoglutarate). Plays an important role in the excretion of endogenous and exogenous organic anions, especially from the kidney and the brain. E1S transport is pH- and chloride-dependent and may also involve E1S/cGMP exchange. Responsible for the transport of prostaglandin E2 (PGE2) and prostaglandin F2(alpha) (PGF2(alpha)) in the basolateral side of the renal tubule. Involved in the transport of neuroactive tryptophan metabolites kynurenate and xanthurenate. Functions as a biopterin transporters involved in the uptake and the secretion of coenzymes tetrahydrobiopterin (BH4), dihydrobiopterin (BH2) and sepiapterin to urine, thereby determining baseline levels of blood biopterins. May be involved in the basolateral transport of steviol, a metabolite of the popular sugar substitute stevioside. May participate in the detoxification/ renal excretion of drugs and xenobiotics, such as the histamine H(2)-receptor antagonists fexofenadine and cimetidine, the antibiotic benzylpenicillin (PCG), the anionic herbicide 2,4-dichloro-phenoxyacetate (2,4-D), the diagnostic agent p-aminohippurate (PAH), the antiviral acyclovir (ACV), and the mycotoxin ochratoxin (OTA), by transporting these exogenous organic anions across the cell membrane in exchange for dicarboxylates such as 2-oxoglutarate. May contribute to the release of cortisol in the adrenals. Involved in one of the detoxification systems on the choroid plexus (CP), removes substrates such as E1S or taurocholate (TC), PCG, 2,4-D and PAH, from the cerebrospinal fluid (CSF) to the blood for eventual excretion in urine and bile. Also contributes to the uptake of several other organic compounds such as the prostanoids prostaglandin E(2) and prostaglandin F(2-alpha), L-carnitine, and the therapeutic drugs allopurinol, 6-mercaptopurine (6-MP) and 5-fluorouracil (5-FU). Mediates the transport of PAH, PCG, and the statins pravastatin and pitavastatin, from the cerebrum into the blood circulation across the blood-brain barrier (BBB). Contributes to the renal uptake of potent uremic toxins (indoxyl sulfate (IS), indole acetate (IA), hippurate/N-benzoylglycine (HA) and 3-carboxy-4-methyl-5-propyl-2-furanpropionate (CMPF)), pravastatin, PCG, E1S and dehydroepiandrosterone sulfate (DHEAS), and is partly involved in the renal uptake of temocaprilat (an angiotensin-converting enzyme (ACE) inhibitor). In summary, plays a role in the efflux of drugs and xenobiotics, helping reduce their undesired toxicological effects on the body. The protein is Organic anion transporter 3 (Slc22a8) of Mus musculus (Mouse).